Consider the following 157-residue polypeptide: Protein Smg homolog (157 aa).

The protein belongs to the Smg family.

The chain is Protein Smg homolog from Stenotrophomonas maltophilia (strain R551-3).